The primary structure comprises 1422 residues: DNA-directed RNA polymerase subunit beta (1422 aa).

The interval 1392 to 1422 (QAAREAAERDLGGGPLGAPRGAVASGEKSSA) is disordered.

Belongs to the RNA polymerase beta chain family. In terms of assembly, the RNAP catalytic core consists of 2 alpha, 1 beta, 1 beta' and 1 omega subunit. When a sigma factor is associated with the core the holoenzyme is formed, which can initiate transcription.

The catalysed reaction is RNA(n) + a ribonucleoside 5'-triphosphate = RNA(n+1) + diphosphate. In terms of biological role, DNA-dependent RNA polymerase catalyzes the transcription of DNA into RNA using the four ribonucleoside triphosphates as substrates. The protein is DNA-directed RNA polymerase subunit beta of Anaeromyxobacter dehalogenans (strain 2CP-C).